A 1063-amino-acid polypeptide reads, in one-letter code: E3 ubiquitin-protein ligase PDZRN3 (1063 aa).

An RING-type; degenerate zinc finger spans residues Cys-18–Cys-56. The TRAF-type zinc-finger motif lies at Glu-100 to Gly-158. 2 consecutive PDZ domains span residues Thr-249 to Thr-339 and Glu-419 to Pro-503. Residue Ser-427 is modified to Phosphoserine. A disordered region spans residues Gln-545–Gly-602. Positions Thr-554–Asn-563 are enriched in polar residues. Residues Gln-564–Glu-582 are compositionally biased toward basic and acidic residues. Residues Glu-680–Arg-705 adopt a coiled-coil conformation. The segment covering Glu-746–Ser-755 has biased composition (basic and acidic residues). Disordered regions lie at residues Glu-746–Tyr-798 and Ile-834–Gly-853. The segment covering Ser-756–Leu-770 has biased composition (polar residues).

In terms of assembly, interacts with NLGN1 and EFNB2. Interacts with UBE2D2 and with MUSK via the first PDZ domain. In myotubes, the interaction between PDZRN3 and MUSK is enhanced upon agrin stimulation. Auto-ubiquitinated. As to expression, highly expressed in skeletal and cardiac muscle and at lower levels in spinal cord and brain (at protein level). Also expressed in kidney and lung. In muscles, concentrated at the neuromuscular junction (NMJ).

The protein resides in the synapse. It localises to the cytoplasm. It catalyses the reaction S-ubiquitinyl-[E2 ubiquitin-conjugating enzyme]-L-cysteine + [acceptor protein]-L-lysine = [E2 ubiquitin-conjugating enzyme]-L-cysteine + N(6)-ubiquitinyl-[acceptor protein]-L-lysine.. Its pathway is protein modification; protein ubiquitination. In terms of biological role, E3 ubiquitin-protein ligase. Plays an important role in regulating the surface level of MUSK on myotubes. Mediates the ubiquitination of MUSK, promoting its endocytosis and lysosomal degradation. Might contribute to terminal myogenic differentiation. This Mus musculus (Mouse) protein is E3 ubiquitin-protein ligase PDZRN3 (Pdzrn3).